The sequence spans 557 residues: Eudesmanediol synthase (557 aa).

Mg(2+) contacts are provided by Asp310 and Asp314. Positions 310, 314, 450, and 453 each coordinate substrate. The short motif at 310–314 is the DDXXD motif element; sequence DDTFD. 2 residues coordinate Mg(2+): Asn453 and Ser457.

This sequence belongs to the terpene synthase family. As to quaternary structure, monomer. The cofactor is Mg(2+). Mn(2+) is required as a cofactor. As to expression, specifically expressed in roots.

The protein localises to the cytoplasm. It catalyses the reaction (2E,6E)-farnesyl diphosphate + 2 H2O = 7-epi-ent-eudesmane-5,11-diol + diphosphate. It functions in the pathway secondary metabolite biosynthesis; terpenoid biosynthesis. Its function is as follows. Component of the volatile terpenes biosynthesis pathways. Dihydroxylated sesquiterpenoid synthase that generates dually hydroxylated products directly from (E,E)-farnesyl diphosphate, primarily eudesmane-2,11-diol, along with two closely related structural isomers. In Zea mays (Maize), this protein is Eudesmanediol synthase.